The chain runs to 855 residues: Inactive rhomboid protein 1 (855 aa).

The interval 1-35 (MSEARRDSTSSLQRKKPPWLKLDIPSAAPATAEEP) is disordered. The Cytoplasmic portion of the chain corresponds to 1 to 411 (MSEARRDSTS…HRPFFTYWLT (411 aa)). Over residues 25 to 35 (PSAAPATAEEP) the composition is skewed to low complexity. Phosphoserine is present on residues serine 76 and serine 176. Residues threonine 180 and threonine 183 each carry the phosphothreonine modification. Serine 390 carries the phosphoserine modification. The chain crosses the membrane as a helical span at residues 412-432 (FVHSLVTILAVCIYGIAPVGF). Topologically, residues 433–655 (SQHETVDSVL…NPEVPDQFYR (223 aa)) are lumenal. Asparagine 583 carries an N-linked (GlcNAc...) asparagine glycan. Residues 656-676 (LWLSLFLHAGILHCLVSICFQ) traverse the membrane as a helical segment. The Cytoplasmic segment spans residues 677–691 (MTVLRDLEKLAGWHR). The chain crosses the membrane as a helical span at residues 692–712 (IAIIYLLSGVTGNLASAIFLP). Over 713–714 (YR) the chain is Lumenal. A helical membrane pass occupies residues 715–735 (AEVGPAGSQFGILACLFVELF). The Cytoplasmic portion of the chain corresponds to 736–746 (QSWQILARPWR). A helical transmembrane segment spans residues 747–767 (AFFKLLAVVLFLFTFGLLPWI). Over 768-772 (DNFAH) the chain is Lumenal. Residues 773–793 (ISGFISGLFLSFAFLPYISFG) form a helical membrane-spanning segment. Residues 794–803 (KFDLYRKRCQ) lie on the Cytoplasmic side of the membrane. The helical transmembrane segment at 804–824 (IIVFQVVFLGLLAGLVVLFYV) threads the bilayer. At 825-855 (YPVRCEWCEFLTCIPFTDKFCEKYELDAQLH) the chain is on the lumenal side.

It belongs to the peptidase S54 family. In terms of assembly, homodimer, or homooligomer. Interacts with TGFA and HBEGF. Interacts with EGF; may retain EGF in the endoplasmic reticulum and regulates its degradation through the endoplasmic reticulum-associated degradation (ERAD). Interacts (via cytoplasmic N-terminus) with FRMD8/iTAP; this interaction leads to mutual protein stabilization. Interacts with ADAM17/TACE.

Its subcellular location is the endoplasmic reticulum membrane. It is found in the golgi apparatus membrane. Its function is as follows. Regulates ADAM17 protease, a sheddase of the epidermal growth factor (EGF) receptor ligands and TNF, thereby plays a role in sleep, cell survival, proliferation, migration and inflammation. Does not exhibit any protease activity on its own. This chain is Inactive rhomboid protein 1 (RHBDF1), found in Callithrix jacchus (White-tufted-ear marmoset).